A 284-amino-acid chain; its full sequence is Bifunctional protein FolD 2 (284 aa).

NADP(+) contacts are provided by residues 166-168 (GAS) and I232.

This sequence belongs to the tetrahydrofolate dehydrogenase/cyclohydrolase family. Homodimer.

The catalysed reaction is (6R)-5,10-methylene-5,6,7,8-tetrahydrofolate + NADP(+) = (6R)-5,10-methenyltetrahydrofolate + NADPH. The enzyme catalyses (6R)-5,10-methenyltetrahydrofolate + H2O = (6R)-10-formyltetrahydrofolate + H(+). The protein operates within one-carbon metabolism; tetrahydrofolate interconversion. In terms of biological role, catalyzes the oxidation of 5,10-methylenetetrahydrofolate to 5,10-methenyltetrahydrofolate and then the hydrolysis of 5,10-methenyltetrahydrofolate to 10-formyltetrahydrofolate. The polypeptide is Bifunctional protein FolD 2 (Colwellia psychrerythraea (strain 34H / ATCC BAA-681) (Vibrio psychroerythus)).